The following is a 379-amino-acid chain: Acetylajmalan esterase 1 (379 aa).

Residues 1–20 (MGFAPLLVFSLFVFAGTTKG) form the signal peptide. Ser-34 acts as the Nucleophile in catalysis. Asn-96, Asn-178, Asn-197, and Asn-291 each carry an N-linked (GlcNAc...) asparagine glycan. Residues Asp-332 and His-335 contribute to the active site.

This sequence belongs to the 'GDSL' lipolytic enzyme family. As to expression, expressed in roots and leaves at low levels.

The catalysed reaction is 17-O-acetylnorajmaline + H2O = norajmaline + acetate + H(+). It catalyses the reaction 17-O-acetylajmaline + H2O = ajmaline + acetate + H(+). It functions in the pathway alkaloid biosynthesis; ajmaline biosynthesis. Its function is as follows. Acetylesterase involved in the biosynthesis of ajmaline-type monoterpenoid indole alkaloids (MIAs) natural products, important plant-derived pharmaceuticals used in the therapy of heart disorders. Deacetylates 17-O-acetylnorajmaline to produce norajmaline. May also catalyze the conversion of 17-O-acetylajmaline to ajmaline. The protein is Acetylajmalan esterase 1 of Rauvolfia serpentina (Serpentine wood).